The following is a 381-amino-acid chain: Mannitol-1-phosphate 5-dehydrogenase (381 aa).

3 to 14 (AVHFGAGNIGRG) is a binding site for NAD(+).

It belongs to the mannitol dehydrogenase family.

It carries out the reaction D-mannitol 1-phosphate + NAD(+) = beta-D-fructose 6-phosphate + NADH + H(+). The sequence is that of Mannitol-1-phosphate 5-dehydrogenase from Exiguobacterium sibiricum (strain DSM 17290 / CCUG 55495 / CIP 109462 / JCM 13490 / 255-15).